Consider the following 145-residue polypeptide: MIVLDTTVLVYAKGAEHPLRDPCRDLVAAIADERIAATTTAEVIQEFVHVRARRRDRSDAAALGRVTMPNCSRRYSPSIEATSKRGLTLFETTPGLEACDAVLAAVAASAGATALVSADPAFADLSDVVHVIPDAAGMVSLLGDR.

The PINc domain maps to 2-129 (IVLDTTVLVY…PAFADLSDVV (128 aa)). Positions 5 and 100 each coordinate Mg(2+).

It belongs to the PINc/VapC protein family. Requires Mg(2+) as cofactor.

Functionally, toxic component of a type II toxin-antitoxin (TA) system. An RNase. The cognate antitoxin is VapB7. The chain is Ribonuclease VapC7 from Mycobacterium tuberculosis (strain ATCC 25618 / H37Rv).